We begin with the raw amino-acid sequence, 66 residues long: Large ribosomal subunit protein bL35 (66 aa).

It belongs to the bacterial ribosomal protein bL35 family.

The protein is Large ribosomal subunit protein bL35 of Synechococcus sp. (strain RCC307).